Reading from the N-terminus, the 553-residue chain is Imidazole glycerol phosphate synthase hisHF (553 aa).

A Glutamine amidotransferase type-1 domain is found at 3-223; it reads TVHLLDYVAG…QLHSVTLEDS (221 aa). Residues Cys-81, His-194, and Glu-196 each act as for GATase activity in the active site. Positions 232 to 553 are cyclase; it reads LTRRIIACLD…FLVRRFEPDV (322 aa). Residues Asp-241 and Asp-403 contribute to the active site.

The protein in the C-terminal section; belongs to the HisA/HisF family.

The enzyme catalyses 5-[(5-phospho-1-deoxy-D-ribulos-1-ylimino)methylamino]-1-(5-phospho-beta-D-ribosyl)imidazole-4-carboxamide + L-glutamine = D-erythro-1-(imidazol-4-yl)glycerol 3-phosphate + 5-amino-1-(5-phospho-beta-D-ribosyl)imidazole-4-carboxamide + L-glutamate + H(+). It catalyses the reaction L-glutamine + H2O = L-glutamate + NH4(+). The protein operates within amino-acid biosynthesis; L-histidine biosynthesis; L-histidine from 5-phospho-alpha-D-ribose 1-diphosphate: step 5/9. In terms of biological role, IGPS catalyzes the conversion of PRFAR and glutamine to IGP, AICAR and glutamate. The glutaminase domain produces the ammonia necessary for the cyclase domain to produce IGP and AICAR from PRFAR. The ammonia is channeled to the active site of the cyclase domain. This Emericella nidulans (strain FGSC A4 / ATCC 38163 / CBS 112.46 / NRRL 194 / M139) (Aspergillus nidulans) protein is Imidazole glycerol phosphate synthase hisHF (hisHF).